Reading from the N-terminus, the 568-residue chain is Urease subunit alpha (568 aa).

Residues 130-568 (GGIDTHIHFI…LPMAQRYFLF (439 aa)) enclose the Urease domain. Ni(2+)-binding residues include histidine 135, histidine 137, and lysine 218. Lysine 218 carries the post-translational modification N6-carboxylysine. Histidine 220 is a substrate binding site. 2 residues coordinate Ni(2+): histidine 247 and histidine 273. Histidine 321 acts as the Proton donor in catalysis. Aspartate 361 lines the Ni(2+) pocket.

The protein belongs to the metallo-dependent hydrolases superfamily. Urease alpha subunit family. In terms of assembly, heterotrimer of UreA (gamma), UreB (beta) and UreC (alpha) subunits. Three heterotrimers associate to form the active enzyme. It depends on Ni cation as a cofactor. Carboxylation allows a single lysine to coordinate two nickel ions.

The protein localises to the cytoplasm. It catalyses the reaction urea + 2 H2O + H(+) = hydrogencarbonate + 2 NH4(+). The protein operates within nitrogen metabolism; urea degradation; CO(2) and NH(3) from urea (urease route): step 1/1. This is Urease subunit alpha from Burkholderia pseudomallei (strain 1106a).